We begin with the raw amino-acid sequence, 842 residues long: Pentatricopeptide repeat-containing protein At3g22690 (842 aa).

PPR repeat units lie at residues 98–132 (TCFMYNSLIRGYASSGLCNEAILLFLRMMNSGISP), 133–167 (DKYTFPFGLSACAKSRAKGNGIQIHGLIVKMGYAK), 168–202 (DLFVQNSLVHFYAECGELDSARKVFDEMSERNVVS), 203–234 (WTSMICGYARRDFAKDAVDLFFRMVRDEEVTP), 235–269 (NSVTMVCVISACAKLEDLETGEKVYAFIRNSGIEV), 270–300 (NDLMVSALVDMYMKCNAIDVAKRLFDEYGAS), 301–335 (NLDLCNAMASNYVRQGLTREALGVFNLMMDSGVRP), 336–370 (DRISMLSAISSCSQLRNILWGKSCHGYVLRNGFES), 371–401 (WDNICNALIDMYMKCHRQDTAFRIFDRMSNK), 402–436 (TVVTWNSIVAGYVENGEVDAAWETFETMPEKNIVS), 437–463 (WNTIISGLVQGSLFEEAIEVFCSMQSQ), 469–503 (DGVTMMSIASACGHLGALDLAKWIYYYIEKNGIQL), 504–534 (DVRLGTTLVDMFSRCGDPESAMSIFNSLTNR), 535–569 (DVSAWTAAIGAMAMAGNAERAIELFDDMIEQGLKP), 570–605 (DGVAFVGALTACSHGGLVQQGKEIFYSMLKLHGVSP), and 606–636 (EDVHYGCMVDLLGRAGLLEEAVQLIEDMPME). Residues 641–716 (IWNSLLAACR…PPGTSSIQIR (76 aa)) form a type E motif region. The interval 717 to 747 (GKTHEFTSGDESHPEMPNIEAMLDEVSQRAS) is type E(+) motif. The type DYW motif stretch occupies residues 748–842 (HLGHVPDLSN…QGKCSCGDFW (95 aa)).

This sequence belongs to the PPR family. PCMP-H subfamily.

The protein is Pentatricopeptide repeat-containing protein At3g22690 (PCMP-H56) of Arabidopsis thaliana (Mouse-ear cress).